The following is a 67-amino-acid chain: UPF0434 protein Bcep1808_2639 (67 aa).

This sequence belongs to the UPF0434 family.

In Burkholderia vietnamiensis (strain G4 / LMG 22486) (Burkholderia cepacia (strain R1808)), this protein is UPF0434 protein Bcep1808_2639.